Reading from the N-terminus, the 262-residue chain is Hydroxyethylthiazole kinase (262 aa).

Position 50 (Met-50) interacts with substrate. ATP-binding residues include Arg-125 and Thr-171. Gly-198 is a substrate binding site.

This sequence belongs to the Thz kinase family. Mg(2+) is required as a cofactor.

The catalysed reaction is 5-(2-hydroxyethyl)-4-methylthiazole + ATP = 4-methyl-5-(2-phosphooxyethyl)-thiazole + ADP + H(+). Its pathway is cofactor biosynthesis; thiamine diphosphate biosynthesis; 4-methyl-5-(2-phosphoethyl)-thiazole from 5-(2-hydroxyethyl)-4-methylthiazole: step 1/1. Its function is as follows. Catalyzes the phosphorylation of the hydroxyl group of 4-methyl-5-beta-hydroxyethylthiazole (THZ). This chain is Hydroxyethylthiazole kinase, found in Shigella flexneri serotype 5b (strain 8401).